The chain runs to 171 residues: MTFISNLADTRLAWGLLFLSALVLVAYALFSQHAMGLQPCIMCIYQRTAIFGIMFACVPVLAANNMLTRLFAFTVWGISAIWGGLIAWEHYDIQNAANPFFATCEIVPNFPSWLPLHEWLPNLFAATGDCGNIDWVFMDMSMPQWMMVVFAIYSSIWFVVLASRLIGNRAI.

Over 1 to 13 the chain is Cytoplasmic; sequence MTFISNLADTRLA. A helical membrane pass occupies residues 14-30; it reads WGLLFLSALVLVAYALF. Residues 31-48 lie on the Periplasmic side of the membrane; sequence SQHAMGLQPCIMCIYQRT. C40 and C43 form a disulfide bridge. Residues 49-63 form a helical membrane-spanning segment; sequence AIFGIMFACVPVLAA. The Cytoplasmic portion of the chain corresponds to 64 to 70; sequence NNMLTRL. A helical membrane pass occupies residues 71–88; the sequence is FAFTVWGISAIWGGLIAW. Residues 89 to 144 are Periplasmic-facing; that stretch reads EHYDIQNAANPFFATCEIVPNFPSWLPLHEWLPNLFAATGDCGNIDWVFMDMSMPQ. A disulfide bond links C104 and C130. Residues 145-163 form a helical membrane-spanning segment; it reads WMMVVFAIYSSIWFVVLAS. Residues 164-171 lie on the Cytoplasmic side of the membrane; the sequence is RLIGNRAI.

The protein belongs to the DsbB family.

The protein localises to the cell inner membrane. Its function is as follows. Required for disulfide bond formation in some periplasmic proteins. Acts by oxidizing the DsbA protein. The sequence is that of Disulfide bond formation protein B from Pseudoalteromonas atlantica (strain T6c / ATCC BAA-1087).